Here is a 184-residue protein sequence, read N- to C-terminus: ATP synthase subunit b, chloroplastic (184 aa).

Residues 27–49 (LATNPINLSVVLGVLIFFGKGVL) traverse the membrane as a helical segment.

The protein belongs to the ATPase B chain family. As to quaternary structure, F-type ATPases have 2 components, F(1) - the catalytic core - and F(0) - the membrane proton channel. F(1) has five subunits: alpha(3), beta(3), gamma(1), delta(1), epsilon(1). F(0) has four main subunits: a(1), b(1), b'(1) and c(10-14). The alpha and beta chains form an alternating ring which encloses part of the gamma chain. F(1) is attached to F(0) by a central stalk formed by the gamma and epsilon chains, while a peripheral stalk is formed by the delta, b and b' chains.

The protein resides in the plastid. It localises to the chloroplast thylakoid membrane. In terms of biological role, f(1)F(0) ATP synthase produces ATP from ADP in the presence of a proton or sodium gradient. F-type ATPases consist of two structural domains, F(1) containing the extramembraneous catalytic core and F(0) containing the membrane proton channel, linked together by a central stalk and a peripheral stalk. During catalysis, ATP synthesis in the catalytic domain of F(1) is coupled via a rotary mechanism of the central stalk subunits to proton translocation. Functionally, component of the F(0) channel, it forms part of the peripheral stalk, linking F(1) to F(0). This is ATP synthase subunit b, chloroplastic from Atropa belladonna (Belladonna).